The sequence spans 344 residues: Uroporphyrinogen decarboxylase (344 aa).

Residues 26 to 30, F45, D75, Y151, S206, and H320 contribute to the substrate site; that span reads RQAGR.

This sequence belongs to the uroporphyrinogen decarboxylase family. As to quaternary structure, homodimer.

The protein resides in the cytoplasm. It carries out the reaction uroporphyrinogen III + 4 H(+) = coproporphyrinogen III + 4 CO2. It functions in the pathway porphyrin-containing compound metabolism; protoporphyrin-IX biosynthesis; coproporphyrinogen-III from 5-aminolevulinate: step 4/4. Its function is as follows. Catalyzes the decarboxylation of four acetate groups of uroporphyrinogen-III to yield coproporphyrinogen-III. This Staphylococcus saprophyticus subsp. saprophyticus (strain ATCC 15305 / DSM 20229 / NCIMB 8711 / NCTC 7292 / S-41) protein is Uroporphyrinogen decarboxylase.